The sequence spans 113 residues: Mini zinc finger protein 2 (113 aa).

The ZF-HD dimerization-type; degenerate zinc finger occupies 24 to 83; that stretch reads YGECRRNHAASTGGHAVDGCREFIAAEDGGGGNSTSAVGVAAAALKCAACGCHRSFHRRV. A disordered region spans residues 93–113; sequence DCASGDTSSSSPSSSSSLSSE. Over residues 100 to 113 the composition is skewed to low complexity; sequence SSSSPSSSSSLSSE.

In terms of assembly, homo- and heterodimers.

The protein localises to the cytoplasm. In terms of biological role, inhibits zinc finger homeodomain (ZHD) transcription factors, by interacting with them to prevent both their nuclear localization and their DNA-binding properties. This chain is Mini zinc finger protein 2 (MIF3), found in Oryza sativa subsp. japonica (Rice).